We begin with the raw amino-acid sequence, 422 residues long: Tyrosine--tRNA ligase (422 aa).

Y35 contributes to the L-tyrosine binding site. Positions 40–49 match the 'HIGH' region motif; that stretch reads PTADSLHIGH. The L-tyrosine site is built by Y170 and Q174. The short motif at 232-236 is the 'KMSKS' region element; that stretch reads KFGKT. K235 lines the ATP pocket. One can recognise an S4 RNA-binding domain in the interval 355–421; the sequence is LTLVDLLVES…GKKKYFLVTY (67 aa).

It belongs to the class-I aminoacyl-tRNA synthetase family. TyrS type 1 subfamily. Homodimer.

The protein resides in the cytoplasm. It carries out the reaction tRNA(Tyr) + L-tyrosine + ATP = L-tyrosyl-tRNA(Tyr) + AMP + diphosphate + H(+). Functionally, catalyzes the attachment of tyrosine to tRNA(Tyr) in a two-step reaction: tyrosine is first activated by ATP to form Tyr-AMP and then transferred to the acceptor end of tRNA(Tyr). The polypeptide is Tyrosine--tRNA ligase (Bacillus pumilus (strain SAFR-032)).